The chain runs to 146 residues: uncharacterized protein (146 aa).

A run of 5 helical transmembrane segments spans residues 5-27 (GAMVLLTMLILYAAPSFALYGLA), 32-49 (FVYVGAIMIVAFGVYIIL), 61-80 (LAVMLISALTAIFLAYFFSG), 90-108 (SLGLFAVVAAMLLALARVF), and 120-142 (FFLKWILVVAITFTILSVFMLFL).

Its subcellular location is the cell membrane. This is an uncharacterized protein from Archaeoglobus fulgidus (strain ATCC 49558 / DSM 4304 / JCM 9628 / NBRC 100126 / VC-16).